The following is a 402-amino-acid chain: uncharacterized protein (402 aa).

12 consecutive transmembrane segments (helical) span residues 23 to 43, 52 to 72, 90 to 110, 121 to 141, 158 to 178, 180 to 200, 228 to 248, 255 to 275, 282 to 302, 309 to 329, 351 to 371, and 375 to 395; these read IVSVVMFTFIGYLTIGIPLAV, LGYGSVLAGLVISLQYLATLL, VLYGMAGSAASGLFMLLSVAI, LLVGRLVLGAAESLVGSAAIG, WNGIASYGAIALGAPLGVLLV, WLGLWSMGASIVLLGALGFAL, GMGLALGAIGFGTIATFITLY, ANAVLCLSAFGGCFIGARLLF, LGGFRVAIICLGVESLGLLLL, WVGLAGAALTGFGFSLVFPAF, LFVDLSLGITGPLVGFVANLF, and SMFLFACLASLSGLALAIALH.

The protein belongs to the major facilitator superfamily. YhhS family.

It localises to the cell inner membrane. This is an uncharacterized protein from Pseudomonas aeruginosa (strain UCBPP-PA14).